A 96-amino-acid polypeptide reads, in one-letter code: MRTKIFAAGTVLTCLMLCAGCTSAPPAPTPVIVPNACPKVSLCPMPGSDPQTNGDLSADIRQLENALARCASQVKMIKHCQDENDAQTRQPAQGAD.

Residues 1-24 (MRTKIFAAGTVLTCLMLCAGCTSA) form the signal peptide. The Periplasmic segment spans residues 25-96 (PPAPTPVIVP…QTRQPAQGAD (72 aa)). Positions 54–78 (GDLSADIRQLENALARCASQVKMIK) form a coiled coil.

Interacts (via C-terminus) with the spanin inner membrane subunit (via C-terminus). Part of the spanin complex which spans the entire periplasmic space. The spanin complex is composed of spanin inner membrane subunit and spanin outer membrane subunit.

Its subcellular location is the host cell outer membrane. Functionally, component of the spanin complex that disrupts the host outer membrane and participates in cell lysis during virus exit. The spanin complex conducts the final step in host lysis by disrupting the outer membrane after holin and endolysin action have permeabilized the inner membrane and degraded the host peptidoglycans. Host outer membrane disruption is possibly due to local fusion between the inner and outer membrane performed by the spanin complex. In Enterobacteriaceae (Bacteriophage P2), this protein is Probable spanin, outer lipoprotein subunit (lysC).